The following is a 123-amino-acid chain: Large ribosomal subunit protein bL12 (123 aa).

The protein belongs to the bacterial ribosomal protein bL12 family. Homodimer. Part of the ribosomal stalk of the 50S ribosomal subunit. Forms a multimeric L10(L12)X complex, where L10 forms an elongated spine to which 2 to 4 L12 dimers bind in a sequential fashion. Binds GTP-bound translation factors.

Functionally, forms part of the ribosomal stalk which helps the ribosome interact with GTP-bound translation factors. Is thus essential for accurate translation. The protein is Large ribosomal subunit protein bL12 of Clostridium botulinum (strain ATCC 19397 / Type A).